Consider the following 221-residue polypeptide: Protein-L-isoaspartate O-methyltransferase (221 aa).

Residue Ser68 is part of the active site.

It belongs to the methyltransferase superfamily. L-isoaspartyl/D-aspartyl protein methyltransferase family.

It is found in the cytoplasm. The catalysed reaction is [protein]-L-isoaspartate + S-adenosyl-L-methionine = [protein]-L-isoaspartate alpha-methyl ester + S-adenosyl-L-homocysteine. Functionally, catalyzes the methyl esterification of L-isoaspartyl residues in peptides and proteins that result from spontaneous decomposition of normal L-aspartyl and L-asparaginyl residues. It plays a role in the repair and/or degradation of damaged proteins. This Desulfosudis oleivorans (strain DSM 6200 / JCM 39069 / Hxd3) (Desulfococcus oleovorans) protein is Protein-L-isoaspartate O-methyltransferase.